A 107-amino-acid chain; its full sequence is Thioredoxin (107 aa).

In terms of domain architecture, Thioredoxin spans 2 to 107 (SATPQVSDAS…TLASTLEKYL (106 aa)). A disulfide bridge links Cys-32 with Cys-35.

Belongs to the thioredoxin family.

Functionally, component of the thioredoxin-thioredoxin reductase system. Participates in various redox reactions through the reversible oxidation of its active center dithiol to a disulfide and catalyzes dithiol-disulfide exchange reactions. The protein is Thioredoxin (trxA) of Synechocystis sp. (strain ATCC 27184 / PCC 6803 / Kazusa).